The primary structure comprises 317 residues: Ribosomal protein L11 methyltransferase (317 aa).

Residues threonine 158, glycine 179, aspartate 201, and asparagine 244 each coordinate S-adenosyl-L-methionine.

Belongs to the methyltransferase superfamily. PrmA family.

Its subcellular location is the cytoplasm. The enzyme catalyses L-lysyl-[protein] + 3 S-adenosyl-L-methionine = N(6),N(6),N(6)-trimethyl-L-lysyl-[protein] + 3 S-adenosyl-L-homocysteine + 3 H(+). In terms of biological role, methylates ribosomal protein L11. The sequence is that of Ribosomal protein L11 methyltransferase from Streptococcus equi subsp. equi (strain 4047).